A 171-amino-acid chain; its full sequence is Protein hunchback (171 aa).

2 disordered regions span residues 14-93 (PMSH…PMQI) and 124-171 (SNDK…KYMA). The span at 17 to 31 (HHHHHSHHSHGHHHS) shows a compositional bias: basic residues. 2 stretches are compositionally biased toward low complexity: residues 32-42 (NSNSNASSPRQ) and 52-80 (SSSNLHLEQYLKQQQQHQQQQQQPMDTPL). Residues 152–171 (EPEKDHDLMSNSSEDMKYMA) show a composition bias toward basic and acidic residues.

This sequence belongs to the hunchback C2H2-type zinc-finger protein family.

Its subcellular location is the nucleus. Its function is as follows. Gap class segmentation protein that controls development of head structures. This is Protein hunchback (hb) from Scaptomyza albovittata (Fruit fly).